The primary structure comprises 197 residues: NADH-quinone oxidoreductase subunit C (197 aa).

This sequence belongs to the complex I 30 kDa subunit family. NDH-1 is composed of 14 different subunits. Subunits NuoB, C, D, E, F, and G constitute the peripheral sector of the complex.

Its subcellular location is the cell inner membrane. The enzyme catalyses a quinone + NADH + 5 H(+)(in) = a quinol + NAD(+) + 4 H(+)(out). Functionally, NDH-1 shuttles electrons from NADH, via FMN and iron-sulfur (Fe-S) centers, to quinones in the respiratory chain. The immediate electron acceptor for the enzyme in this species is believed to be ubiquinone. Couples the redox reaction to proton translocation (for every two electrons transferred, four hydrogen ions are translocated across the cytoplasmic membrane), and thus conserves the redox energy in a proton gradient. This chain is NADH-quinone oxidoreductase subunit C, found in Methylobacillus flagellatus (strain ATCC 51484 / DSM 6875 / VKM B-1610 / KT).